The primary structure comprises 192 residues: Probable nicotinate-nucleotide adenylyltransferase (192 aa).

This sequence belongs to the NadD family.

The catalysed reaction is nicotinate beta-D-ribonucleotide + ATP + H(+) = deamido-NAD(+) + diphosphate. The protein operates within cofactor biosynthesis; NAD(+) biosynthesis; deamido-NAD(+) from nicotinate D-ribonucleotide: step 1/1. Catalyzes the reversible adenylation of nicotinate mononucleotide (NaMN) to nicotinic acid adenine dinucleotide (NaAD). The chain is Probable nicotinate-nucleotide adenylyltransferase from Bradyrhizobium sp. (strain BTAi1 / ATCC BAA-1182).